A 111-amino-acid chain; its full sequence is MKTATCSLLICVFLLQLMVPVNTDGTLDIIGKKKVKELLAHQDNYPSAVRKTLSCTNVKSMSKWASCPAGMTATGCSCGFACGSWEIQNENICNCLCLIVDWAYARCCQLS.

Residues 1-23 (MKTATCSLLICVFLLQLMVPVNT) form the signal peptide. Disulfide bonds link Cys55–Cys108, Cys67–Cys107, Cys76–Cys93, Cys78–Cys95, and Cys82–Cys97.

The protein belongs to the resistin/FIZZ family. As to quaternary structure, monomer. Highest levels in adipose tissue.

The protein resides in the secreted. In terms of biological role, probable hormone. Plays a role in pulmonary vascular remodeling. This is Resistin-like alpha (Retnla) from Rattus norvegicus (Rat).